The chain runs to 260 residues: Glutamate racemase (260 aa).

Substrate contacts are provided by residues 14–15 and 46–47; these read DS and YG. C77 functions as the Proton donor/acceptor in the catalytic mechanism. Substrate is bound at residue 78–79; that stretch reads NT. C188 acts as the Proton donor/acceptor in catalysis. Substrate is bound at residue 189 to 190; that stretch reads TH.

This sequence belongs to the aspartate/glutamate racemases family.

It catalyses the reaction L-glutamate = D-glutamate. It functions in the pathway cell wall biogenesis; peptidoglycan biosynthesis. Its function is as follows. Provides the (R)-glutamate required for cell wall biosynthesis. This is Glutamate racemase from Clostridium perfringens (strain SM101 / Type A).